The chain runs to 645 residues: Cysteine-rich receptor-like protein kinase 19 (645 aa).

The signal sequence occupies residues 1–20; the sequence is MSSLISFIFLFLFSSITASA. The Extracellular portion of the chain corresponds to 21-262; sequence QNTFYLYHNC…PRPGKGGNSS (242 aa). 2 consecutive Gnk2-homologous domains span residues 24 to 129 and 135 to 239; these read FYLY…NRNI and TDGG…NYAF. 7 N-linked (GlcNAc...) asparagine glycosylation sites follow: Asn-29, Asn-39, Asn-57, Asn-101, Asn-185, Asn-241, and Asn-260. Residues 263–283 traverse the membrane as a helical segment; sequence VIIIAVVVPITVLFLLLVAVF. At 284 to 645 the chain is on the cytoplasmic side; the sequence is SVRAKNKRTL…EASITRVTPR (362 aa). The region spanning 326–603 is the Protein kinase domain; it reads FLPINKLGQG…IVQMLTTSLI (278 aa). ATP is bound by residues 332–340 and Lys-354; that span reads LGQGGFGEV. Tyr-399 carries the phosphotyrosine modification. Asp-451 functions as the Proton acceptor in the catalytic mechanism. Thr-491 is subject to Phosphothreonine. Tyr-499 carries the phosphotyrosine modification. A disordered region spans residues 616-645; sequence RSKQEQAGPSIDSSTHCSVDEASITRVTPR. The segment covering 620-632 has biased composition (polar residues); it reads EQAGPSIDSSTHC.

Belongs to the protein kinase superfamily. Ser/Thr protein kinase family. CRK subfamily. In terms of assembly, interacts with MWL1.

The protein localises to the membrane. It carries out the reaction L-seryl-[protein] + ATP = O-phospho-L-seryl-[protein] + ADP + H(+). The catalysed reaction is L-threonyl-[protein] + ATP = O-phospho-L-threonyl-[protein] + ADP + H(+). The chain is Cysteine-rich receptor-like protein kinase 19 (CRK19) from Arabidopsis thaliana (Mouse-ear cress).